The chain runs to 359 residues: Probable F-box protein At3g61730 (359 aa).

Basic and acidic residues-rich tracts occupy residues 1–14 (MKTRSSDAEGDSRG) and 37–48 (QKNDIQREEDGR). Positions 1 to 60 (MKTRSSDAEGDSRGKMIAPVGEGNGGRKRKLVQSNEQKNDIQREEDGRAKRRIVQSSDQK) are disordered. An F-box; degenerate domain is found at 82-128 (QSRFSWYEQDIWTYISRFLDGKSLVKLGATNKWFYKIAMEDTVWRFA).

In terms of assembly, interacts with SKP1A. In terms of tissue distribution, expressed in flower buds, developing anthers, pollen grains, siliques, rosette leaves and roots. Detected at lower levels in open flowers, stems and cauline leaves. Expressed in young seedling in the hydathodes, shoot apical meristem, root tips and lateral root primordia.

The protein localises to the nucleus. In terms of biological role, regulates tapetum degeneration and pollen maturation during anther development. In Arabidopsis thaliana (Mouse-ear cress), this protein is Probable F-box protein At3g61730 (RMF).